Reading from the N-terminus, the 577-residue chain is Arginine--tRNA ligase (577 aa).

Positions 122-132 (PNVAKEMHVGH) match the 'HIGH' region motif.

This sequence belongs to the class-I aminoacyl-tRNA synthetase family. Monomer.

Its subcellular location is the cytoplasm. The enzyme catalyses tRNA(Arg) + L-arginine + ATP = L-arginyl-tRNA(Arg) + AMP + diphosphate. In Escherichia coli O8 (strain IAI1), this protein is Arginine--tRNA ligase.